We begin with the raw amino-acid sequence, 224 residues long: E3 ubiquitin-protein ligase TRIM48 (224 aa).

Residues 31 to 72 form an RING-type zinc finger; it reads CPICMNYFIDPVTIDCGHSFCRPCFYLNWQDIPILTQCFECI. A B box-type zinc finger spans residues 104 to 145; it reads SEEQMCGIHRETKKMFCEVDRSLLCLLCSSSQEHRYHRHCPA. The Zn(2+) site is built by cysteine 109, histidine 112, cysteine 131, and histidine 137.

It belongs to the TRIM/RBCC family. Interacts with PRMT1; the interaction leads to ubiquitination of PRMT1 by TRIM48. Interacts with MAP3K5. Interacts with STRAP.

Its subcellular location is the cytoplasm. The protein localises to the cytosol. The enzyme catalyses S-ubiquitinyl-[E2 ubiquitin-conjugating enzyme]-L-cysteine + [acceptor protein]-L-lysine = [E2 ubiquitin-conjugating enzyme]-L-cysteine + N(6)-ubiquitinyl-[acceptor protein]-L-lysine.. Its function is as follows. E3 ubiquitin-protein ligase which promotes K48-linked polyubiquitination of protein methyltransferase PRMT1, leading to PRMT1 degradation. This suppresses methylation of the PRMT1 substrate MAP3K5/ASK1, promoting its activation and increasing MAP3K5-dependent cell death induced by oxidative stress. TRIM48-mediated ubiquitination of PRMT1 also suppresses methylation of FOXO1 by PRMT1, leading to inhibition of FOXO1 transcriptional activity. In Homo sapiens (Human), this protein is E3 ubiquitin-protein ligase TRIM48.